We begin with the raw amino-acid sequence, 89 residues long: Small ribosomal subunit protein uS15 (89 aa).

Belongs to the universal ribosomal protein uS15 family. Part of the 30S ribosomal subunit. Forms a bridge to the 50S subunit in the 70S ribosome, contacting the 23S rRNA.

One of the primary rRNA binding proteins, it binds directly to 16S rRNA where it helps nucleate assembly of the platform of the 30S subunit by binding and bridging several RNA helices of the 16S rRNA. In terms of biological role, forms an intersubunit bridge (bridge B4) with the 23S rRNA of the 50S subunit in the ribosome. This chain is Small ribosomal subunit protein uS15, found in Caulobacter sp. (strain K31).